The following is an 83-amino-acid chain: Hainantoxin-III 7 (83 aa).

Positions 1–21 (MKASMFLALAGLVLLFVVGYA) are cleaved as a signal peptide. The propeptide occupies 22-48 (SESEEKEFPRELLSKVFAVDDFKGEER). 3 cysteine pairs are disulfide-bonded: cysteine 50–cysteine 65, cysteine 57–cysteine 70, and cysteine 64–cysteine 77. Leucine 81 is subject to Leucine amide.

Belongs to the neurotoxin 10 (Hwtx-1) family. 15 (Hntx-3) subfamily. Monomer. Expressed by the venom gland.

Its subcellular location is the secreted. Selective antagonist of neuronal tetrodotoxin (TTX)-sensitive voltage-gated sodium channels (IC(50)=1270 nM on Nav1.1/SCN1A, 270 nM on Nav1.2/SCN2A, 491 nM on Nav1.3/SCN3A and 232 nM on Nav1.7/SCN9A). This toxin suppress Nav1.7 current amplitude without significantly altering the activation, inactivation, and repriming kinetics. Short extreme depolarizations partially activate the toxin-bound channel, indicating voltage-dependent inhibition of this toxin. This toxin increases the deactivation of the Nav1.7 current after extreme depolarizations. The toxin-Nav1.7 complex is gradually dissociated upon prolonged strong depolarizations in a voltage-dependent manner, and the unbound toxin rebinds to Nav1.7 after a long repolarization. Moreover, analysis of chimeric channels showed that the DIIS3-S4 linker is critical for toxin binding to Nav1.7. These data are consistent with this toxin interacting with Nav1.7 site 4 and trapping the domain II voltage sensor in the closed state. The protein is Hainantoxin-III 7 of Cyriopagopus hainanus (Chinese bird spider).